The sequence spans 474 residues: Lipoprotein lipase (474 aa).

Residues 1–27 form the signal peptide; the sequence is MESKALLLVALGVWLQSLTAFRGGVAA. The segment at 32–53 is interaction with GPIHBP1; sequence RDFSDIESKFALRTPEDTAEDT. An intrachain disulfide couples Cys-54 to Cys-67. Asn-70 is a glycosylation site (N-linked (GlcNAc...) asparagine). Position 121 is a 3'-nitrotyrosine (Tyr-121). Ser-159 (nucleophile) is an active-site residue. The active-site Charge relay system is Asp-183. Tyr-191 carries the post-translational modification 3'-nitrotyrosine. Ca(2+) contacts are provided by Ala-194, Arg-197, Ser-199, and Asp-202. An intrachain disulfide couples Cys-243 to Cys-266. Residues 243 to 266 are essential for determining substrate specificity; that stretch reads CNIGEAIRVIAEKGLGDVDQLVKC. The Charge relay system role is filled by His-268. Intrachain disulfides connect Cys-291–Cys-310 and Cys-302–Cys-305. Residues 341 to 464 form the PLAT domain; sequence FHYQVKIHFS…KGKDAAVFVK (124 aa). 3'-nitrotyrosine is present on Tyr-343. Asn-386 is a glycosylation site (N-linked (GlcNAc...) asparagine). The tract at residues 417 to 421 is important for interaction with lipoprotein particles; sequence WSDWW. The tract at residues 430-434 is important for heparin binding; sequence KIRVK. The interval 443-467 is interaction with GPIHBP1; that stretch reads IFCAREKVSHLQKGKDAAVFVKCHD. Cys-445 and Cys-465 are disulfide-bonded.

The protein belongs to the AB hydrolase superfamily. Lipase family. In terms of assembly, homodimer. Interacts with GPIHBP1 with 1:1 stoichiometry. Interacts with APOC2; the interaction activates LPL activity in the presence of lipids. Interaction with heparan sulfate proteoglycans is required to protect LPL against loss of activity. Associates with lipoprotein particles in blood plasma. Interacts with LMF1 and SEL1L; interaction with SEL1L is required to prevent aggregation of newly synthesized LPL in the endoplasmic reticulum (ER), and for normal export of LPL from the ER to the extracellular space. Interacts with SORL1; SORL1 acts as a sorting receptor, promoting LPL localization to endosomes and later to lysosomes, leading to degradation of newly synthesized LPL. In terms of processing, tyrosine nitration after lipopolysaccharide (LPS) challenge down-regulates the lipase activity.

It is found in the cell membrane. The protein resides in the secreted. The protein localises to the extracellular space. Its subcellular location is the extracellular matrix. It catalyses the reaction a triacylglycerol + H2O = a diacylglycerol + a fatty acid + H(+). The catalysed reaction is a 1,2-diacyl-sn-glycero-3-phosphocholine + H2O = a 2-acyl-sn-glycero-3-phosphocholine + a fatty acid + H(+). It carries out the reaction 1,2,3-tri-(9Z-octadecenoyl)-glycerol + H2O = di-(9Z)-octadecenoylglycerol + (9Z)-octadecenoate + H(+). The enzyme catalyses 1,2-di-(9Z-octadecenoyl)-sn-glycero-3-phosphocholine + H2O = (9Z-octadecenoyl)-sn-glycero-3-phosphocholine + (9Z)-octadecenoate + H(+). It catalyses the reaction 1,2,3-tributanoylglycerol + H2O = dibutanoylglycerol + butanoate + H(+). The catalysed reaction is 1,2-dihexadecanoyl-sn-glycero-3-phosphocholine + H2O = hexadecanoyl-sn-glycero-3-phosphocholine + hexadecanoate + H(+). With respect to regulation, the apolipoprotein APOC2 acts as a coactivator of LPL activity. Ca(2+) binding promotes protein stability and formation of the active homodimer. Interaction with GPIHBP1 protects LPL against inactivation by ANGPTL4. Key enzyme in triglyceride metabolism. Catalyzes the hydrolysis of triglycerides from circulating chylomicrons and very low density lipoproteins (VLDL), and thereby plays an important role in lipid clearance from the blood stream, lipid utilization and storage. Although it has both phospholipase and triglyceride lipase activities it is primarily a triglyceride lipase with low but detectable phospholipase activity. Mediates margination of triglyceride-rich lipoprotein particles in capillaries. Recruited to its site of action on the luminal surface of vascular endothelium by binding to GPIHBP1 and cell surface heparan sulfate proteoglycans. The polypeptide is Lipoprotein lipase (Lpl) (Rattus norvegicus (Rat)).